The primary structure comprises 576 residues: Arginine--tRNA ligase (576 aa).

The short motif at 122–132 is the 'HIGH' region element; that stretch reads PNVAKQMHVGH.

Belongs to the class-I aminoacyl-tRNA synthetase family. In terms of assembly, monomer.

It localises to the cytoplasm. The catalysed reaction is tRNA(Arg) + L-arginine + ATP = L-arginyl-tRNA(Arg) + AMP + diphosphate. The sequence is that of Arginine--tRNA ligase from Yersinia pseudotuberculosis serotype I (strain IP32953).